The sequence spans 425 residues: G protein-activated inward rectifier potassium channel 2 (425 aa).

Residues 1–91 (MTMAKLTESM…IFTTLVDLKW (91 aa)) lie on the Cytoplasmic side of the membrane. 2 positions are modified to phosphoserine: Ser18 and Ser25. A helical transmembrane segment spans residues 92–116 (RFNLLIFVMVYTVTWLFFGMIWWLI). Over 117–140 (AYIRGDMDHIEDPSWTPCVTNLNG) the chain is Extracellular. Residues 141–152 (FVSAFLFSIETE) constitute an intramembrane region (helical; Pore-forming). Residues 153-159 (TTIGYGY) constitute an intramembrane region (pore-forming). The short motif at 154–159 (TIGYGY) is the Selectivity filter element. The Extracellular portion of the chain corresponds to 160–168 (RVITDKCPE). A helical membrane pass occupies residues 169–190 (GIILLLIQSVLGSIVNAFMVGC). The Cytoplasmic segment spans residues 191–425 (MFVKISQPKK…VANLENESKV (235 aa)). The tract at residues 392 to 425 (NQHAELETEEEEKNPEELTERNGDVANLENESKV) is disordered. The PDZ-binding signature appears at 422 to 425 (ESKV).

Belongs to the inward rectifier-type potassium channel (TC 1.A.2.1) family. KCNJ6 subfamily. As to quaternary structure, associates with KCNJ3/GIRK1 or KCNJ5/GRIK4 to form a G-protein-activated heteromultimer pore-forming unit. The resulting inward current is much larger. Interacts (via PDZ-binding motif) with SNX27 (via PDZ domain); the interaction is required for recycling to the plasma membrane when endocytosed and prevent degradation in lysosomes. Pancreatic beta cells and brain.

It is found in the membrane. The enzyme catalyses K(+)(in) = K(+)(out). Its activity is regulated as follows. Activated by phosphatidylinositol 4,5 biphosphate (PtdIns(4,5)P2). In terms of biological role, inward rectifier potassium channels are characterized by a greater tendency to allow potassium to flow into the cell rather than out of it. Their voltage dependence is regulated by the concentration of extracellular potassium; as external potassium is raised, the voltage range of the channel opening shifts to more positive voltages. The inward rectification is mainly due to the blockage of outward current by internal magnesium. This potassium channel may be involved in the regulation of insulin secretion by glucose and/or neurotransmitters acting through G-protein-coupled receptors. This is G protein-activated inward rectifier potassium channel 2 (Kcnj6) from Rattus norvegicus (Rat).